Reading from the N-terminus, the 334-residue chain is N-acetyl-gamma-glutamyl-phosphate reductase (334 aa).

Cys154 is an active-site residue.

This sequence belongs to the NAGSA dehydrogenase family. Type 1 subfamily.

Its subcellular location is the cytoplasm. It catalyses the reaction N-acetyl-L-glutamate 5-semialdehyde + phosphate + NADP(+) = N-acetyl-L-glutamyl 5-phosphate + NADPH + H(+). The protein operates within amino-acid biosynthesis; L-arginine biosynthesis; N(2)-acetyl-L-ornithine from L-glutamate: step 3/4. Functionally, catalyzes the NADPH-dependent reduction of N-acetyl-5-glutamyl phosphate to yield N-acetyl-L-glutamate 5-semialdehyde. In Pectobacterium carotovorum subsp. carotovorum (strain PC1), this protein is N-acetyl-gamma-glutamyl-phosphate reductase.